Reading from the N-terminus, the 1008-residue chain is Envelopment polyprotein (1008 aa).

An N-terminal signal peptide occupies residues 1–17 (MVRTYLLLLLLCGPATP). Residues 18–394 (FFNHLMDVTR…NWANIHCFSK (377 aa)) are Lumenal-facing. N-linked (GlcNAc...) asparagine; by host glycosylation is found at Asn-34, Asn-70, and Asn-108. 8 cysteine pairs are disulfide-bonded: Cys-138/Cys-269, Cys-156/Cys-166, Cys-206/Cys-247, Cys-216/Cys-226, Cys-233/Cys-238, Cys-292/Cys-295, Cys-299/Cys-368, and Cys-319/Cys-324. A glycan (N-linked (GlcNAc...) asparagine; by host) is linked at Asn-208. A helical membrane pass occupies residues 395 to 415 (EQVLILVAVSSLCILLLASVL). Residues 416 to 496 (RALKVIATFT…VRQKMFNLTR (81 aa)) lie on the Cytoplasmic side of the membrane. The tract at residues 419–465 (KVIATFTWKIIKPFWWILSLLCRTCSKRLNKRAERLKESIHSLEEGL) is golgi retention signal. The segment at 461–465 (LEEGL) is important for correct targeting of the glycoproteins to the Golgi complex but not for heterodimerization. The segment at 497 to 513 (LSPVVVGMLCLACPVES) is internal signal sequence for glycoprotein C. Disulfide bonds link Cys-514–Cys-555, Cys-527–Cys-537, Cys-580–Cys-677, Cys-595–Cys-789, Cys-601–Cys-650, Cys-607–Cys-657, Cys-612–Cys-639, Cys-643–Cys-648, Cys-728–Cys-742, Cys-758–Cys-771, Cys-851–Cys-924, and Cys-861–Cys-864. Over 514–977 (CSDSISVTAS…GWFKASWLRA (464 aa)) the chain is Lumenal. A fusion loop region spans residues 601 to 607 (CHLMGAC). The fusion loop stretch occupies residues 644–655 (GGALCQCFNMRP). N-linked (GlcNAc...) asparagine; by host glycosylation is found at Asn-691 and Asn-696. N-linked (GlcNAc...) asparagine; by host glycans are attached at residues Asn-912 and Asn-949. Residues 978-998 (IWAILGGTVSLIIGVVIIYMV) form a helical membrane-spanning segment. Residues 999–1008 (FTLCLKVKKS) lie on the Cytoplasmic side of the membrane.

This sequence belongs to the phlebovirus envelope glycoprotein family. Homodimer. Heterodimer with glycoprotein C. Homotrimer (postfusion). In terms of assembly, heterodimer with glycoprotein N. Homotrimer (postfusion). Specific enzymatic cleavages in vivo yield mature proteins including glycoprotein C and glycoprotein N. In terms of processing, the cytoplasmic tail is Palmitoylated. Post-translationally, glycosylated. Contains principally poly-N-acetyllactosamine glycans. Glycosylated. Contains principally oligomannose-type glycans that can attach to host CD209/DC-SIGN. In terms of processing, palmitoylated.

It is found in the virion membrane. Its subcellular location is the host Golgi apparatus membrane. The protein localises to the host endoplasmic reticulum membrane. Its function is as follows. Structural component of the virion that interacts with glycoprotein C. It shields the hydrophobic fusion loops of the glycoprotein C, preventing premature fusion. The glycoprotein protrusions are arranged on an icosahedral lattice, with T=12 triangulation. They are able to attach the virion to the host cell receptor CD209/DC-SIGN and to promote fusion of membranes with the late endosome after endocytosis of the virion. Plays a role in the packaging of ribonucleoproteins during virus assembly. Structural component of the virion that interacts with glycoprotein N. Acts as a class II fusion protein that is activated upon acidification and subsequent repositioning of the glycoprotein N. The glycoprotein protrusions are arranged on an icosahedral lattice, with T=12 triangulation. They are able to attach the virion to the host cell receptor CD209/DC-SIGN and to promote fusion of membranes with the late endosome after endocytosis of the virion. This chain is Envelopment polyprotein (GP), found in Homo sapiens (Human).